The primary structure comprises 162 residues: Endoribonuclease YbeY (162 aa).

Residues H127, H131, and H137 each coordinate Zn(2+).

Belongs to the endoribonuclease YbeY family. It depends on Zn(2+) as a cofactor.

It is found in the cytoplasm. Functionally, single strand-specific metallo-endoribonuclease involved in late-stage 70S ribosome quality control and in maturation of the 3' terminus of the 16S rRNA. The sequence is that of Endoribonuclease YbeY from Acetivibrio thermocellus (strain ATCC 27405 / DSM 1237 / JCM 9322 / NBRC 103400 / NCIMB 10682 / NRRL B-4536 / VPI 7372) (Clostridium thermocellum).